The following is a 155-amino-acid chain: Molybdopterin synthase catalytic subunit 2 (155 aa).

Substrate-binding positions include 101-102 (HR), lysine 117, and 124-126 (KKE).

The protein belongs to the MoaE family. MOCS2B subfamily. As to quaternary structure, heterotetramer; composed of 2 small (MOCS2A) and 2 large (MOCS2B) subunits.

It localises to the cytoplasm. The catalysed reaction is 2 [molybdopterin-synthase sulfur-carrier protein]-C-terminal-Gly-aminoethanethioate + cyclic pyranopterin phosphate + H2O = molybdopterin + 2 [molybdopterin-synthase sulfur-carrier protein]-C-terminal Gly-Gly + 2 H(+). Its pathway is cofactor biosynthesis; molybdopterin biosynthesis. In terms of biological role, catalytic subunit of the molybdopterin synthase complex, a complex that catalyzes the conversion of precursor Z into molybdopterin. Acts by mediating the incorporation of 2 sulfur atoms from thiocarboxylated MOCS2A into precursor Z to generate a dithiolene group. The polypeptide is Molybdopterin synthase catalytic subunit 2 (Aedes aegypti (Yellowfever mosquito)).